The following is a 412-amino-acid chain: Poly-beta-1,6-N-acetyl-D-glucosamine synthase (412 aa).

4 consecutive transmembrane segments (helical) span residues 7–28 (LLFYPIFMSIYWIVGSIYYFFI), 298–320 (IASITWVYIVLCYLSFLVITANI), 332–354 (IFFFSSFTMTFINIIQFTVALFI), and 364–386 (VGLIFLSWYPTLYWVINAAVVIM).

This sequence belongs to the glycosyltransferase 2 family.

Its subcellular location is the cell membrane. Its function is as follows. N-acetylglucosaminyltransferase that catalyzes the polymerization of single monomer units of UDP-N-acetylglucosamine to produce the linear homomer poly-beta-1,6-N-acetyl-D-glucosamine (PNAG, also referred to as PIA), a biofilm adhesin polysaccharide. Requires IcaD for full activity. The protein is Poly-beta-1,6-N-acetyl-D-glucosamine synthase (icaA) of Staphylococcus epidermidis (strain ATCC 35984 / DSM 28319 / BCRC 17069 / CCUG 31568 / BM 3577 / RP62A).